Reading from the N-terminus, the 226-residue chain is MVKGIQVAIDGPASAGKSTVAKLVAKRFGYIYCDTGAMYRSVTLAALERGIDLSQDDLVSELANQITITFAPGDPQKVFIDGHEVTQAIRSTEVAQHVSTVAAIPAVRSRMVELQRQIAQEGGIVMDGRDIGTTVLPDAPVKIFMVASAHERARRRFLDNQERGIDGGSIEELQRAIELRDQKDSTRAVSPLVKAADAYQLDTTHLTIEQVVDQIAGRIEKTLKQK.

11–19 (GPASAGKST) serves as a coordination point for ATP.

This sequence belongs to the cytidylate kinase family. Type 1 subfamily.

It is found in the cytoplasm. The enzyme catalyses CMP + ATP = CDP + ADP. The catalysed reaction is dCMP + ATP = dCDP + ADP. This is Cytidylate kinase from Limosilactobacillus fermentum (strain NBRC 3956 / LMG 18251) (Lactobacillus fermentum).